We begin with the raw amino-acid sequence, 485 residues long: MKKQPKMTAIALILSGISGLAYGHGYVSAVENGVAEGRVTLCKFAANGTGEKNTHCGAIQYEPQSVEGPDGFPVTGPRDGKIASAESALAAALDEQTADRWVKRPIQAGPQTFEWTFTANHVTKDWKYYITKPNWNPNQPLSRDAFDLNPFCVVEGNMVQPPKRVSHECIVPEREGYQVILAVWDVGDTAASFYNVIDVKFDGNGPVLPDWNPAGQIIPSMDLSIGDTVYTRVFDNEGENPAYRTELKIDSETLTKANQWSYALATKINQTQKQQRAGQLNGDQFVPVYGTNPIYLKEGSGLKSVEIGYQIEAPQPEYSLTVSGLAKEYEIGEQPIQLDLTLEAQGEMSAELTVYNHHQKPLASWSQAMTDGELKSVTLELSEAKAGHHMLVSRIKDRDGNLQDQQTLDFMLVEPQTPPTPGDYDFVFPNGLKEYVAGTKVLASDGAIYQCKPWPYSGYCQQWTSNATQYQPGTGSHWEMAWDKR.

The signal sequence occupies residues 1–23 (MKKQPKMTAIALILSGISGLAYG). Residues 24–201 (HGYVSAVENG…SFYNVIDVKF (178 aa)) enclose the Chitin-binding type-4 domain. The 42-residue stretch at 437–478 (AGTKVLASDGAIYQCKPWPYSGYCQQWTSNATQYQPGTGSHW) folds into the Chitin-binding type-3 domain.

Belongs to the GbpA family.

The protein resides in the secreted. Functionally, probably interacts with GlcNAc residues. May promote attachment to both epithelial cell surfaces and chitin. The polypeptide is GlcNAc-binding protein A (Vibrio cholerae serotype O1 (strain ATCC 39541 / Classical Ogawa 395 / O395)).